We begin with the raw amino-acid sequence, 221 residues long: Enolase-phosphatase E1 (221 aa).

Belongs to the HAD-like hydrolase superfamily. MasA/MtnC family. As to quaternary structure, monomer. The cofactor is Mg(2+).

It carries out the reaction 5-methylsulfanyl-2,3-dioxopentyl phosphate + H2O = 1,2-dihydroxy-5-(methylsulfanyl)pent-1-en-3-one + phosphate. The protein operates within amino-acid biosynthesis; L-methionine biosynthesis via salvage pathway; L-methionine from S-methyl-5-thio-alpha-D-ribose 1-phosphate: step 3/6. It participates in amino-acid biosynthesis; L-methionine biosynthesis via salvage pathway; L-methionine from S-methyl-5-thio-alpha-D-ribose 1-phosphate: step 4/6. Functionally, bifunctional enzyme that catalyzes the enolization of 2,3-diketo-5-methylthiopentyl-1-phosphate (DK-MTP-1-P) into the intermediate 2-hydroxy-3-keto-5-methylthiopentenyl-1-phosphate (HK-MTPenyl-1-P), which is then dephosphorylated to form the acireductone 1,2-dihydroxy-3-keto-5-methylthiopentene (DHK-MTPene). In Xanthobacter autotrophicus (strain ATCC BAA-1158 / Py2), this protein is Enolase-phosphatase E1.